A 201-amino-acid polypeptide reads, in one-letter code: Potassium-transporting ATPase KdpC subunit (201 aa).

Residues 7–27 (PALVLLVALTAITGLAYPLAV) form a helical membrane-spanning segment.

The protein belongs to the KdpC family. As to quaternary structure, the system is composed of three essential subunits: KdpA, KdpB and KdpC.

It localises to the cell inner membrane. Functionally, part of the high-affinity ATP-driven potassium transport (or Kdp) system, which catalyzes the hydrolysis of ATP coupled with the electrogenic transport of potassium into the cytoplasm. This subunit acts as a catalytic chaperone that increases the ATP-binding affinity of the ATP-hydrolyzing subunit KdpB by the formation of a transient KdpB/KdpC/ATP ternary complex. In Methylorubrum extorquens (strain CM4 / NCIMB 13688) (Methylobacterium extorquens), this protein is Potassium-transporting ATPase KdpC subunit.